Consider the following 2302-residue polypeptide: Phosphatidylinositol phosphatase PTPRQ (2302 aa).

An N-terminal signal peptide occupies residues 1 to 18 (MMDFHFSFLFLLIGTSES). Residues 19–1908 (QVDVSSSFDG…GEGLSERTVE (1890 aa)) lie on the Extracellular side of the membrane. Asparagine 54 is a glycosylation site (N-linked (GlcNAc...) asparagine). Fibronectin type-III domains are found at residues 60–155 (PPVF…TAES), 159–254 (KVVN…SSST), 310–398 (PPQN…PPDV), 401–501 (AVFD…PHND), 474–566 (GFYE…TVRT), 570–665 (VPSS…TPED), 670–759 (SPQD…TSET), 764–854 (APEN…TEED), 859–948 (PPQN…TPEG), 953–1053 (PPND…TDQD), 1058–1151 (PVGN…TEED), 1156–1243 (PPII…TDES), 1248–1341 (PPQN…TQES), 1345–1431 (AVRN…LPET), 1435–1539 (APTN…TLPG), 1544–1642 (PPEN…TLES), and 1647–1748 (PPNN…IKAP). N-linked (GlcNAc...) asparagine glycans are attached at residues asparagine 162, asparagine 169, asparagine 318, asparagine 354, and asparagine 389. Asparagine 733 and asparagine 746 each carry an N-linked (GlcNAc...) asparagine glycan. 4 N-linked (GlcNAc...) asparagine glycosylation sites follow: asparagine 904, asparagine 998, asparagine 1010, and asparagine 1040. N-linked (GlcNAc...) asparagine glycosylation is found at asparagine 1251 and asparagine 1256. A glycan (N-linked (GlcNAc...) asparagine) is linked at asparagine 1805. The chain crosses the membrane as a helical span at residues 1909 to 1929 (IILSVTLCILSIILLGTAIFA). Over 1930–2302 (FVRIRQKQKE…VELEWEETTM (373 aa)) the chain is Cytoplasmic. The 257-residue stretch at 2006–2262 (FQEEFSELPK…IFLHQCILDL (257 aa)) folds into the Tyrosine-protein phosphatase domain. Residue cysteine 2203 is the Phosphocysteine intermediate of the active site.

It belongs to the protein-tyrosine phosphatase family. Receptor class 2A subfamily. As to quaternary structure, interacts with TPRN. TPRN, CLIC5 and PTPQR form concentric rings at the base of stereocilia and may form a complex.

The protein resides in the cell projection. It localises to the stereocilium. Its subcellular location is the apical cell membrane. It is found in the basal cell membrane. The enzyme catalyses a 1,2-diacyl-sn-glycero-3-phospho-(1D-myo-inositol-3,4,5-trisphosphate) + H2O = a 1,2-diacyl-sn-glycero-3-phospho-(1D-myo-inositol-4,5-bisphosphate) + phosphate. It catalyses the reaction a 1,2-diacyl-sn-glycero-3-phospho-(1D-myo-inositol-3,4,5-trisphosphate) + H2O = a 1,2-diacyl-sn-glycero-3-phospho-(1D-myo-inositol-3,4-bisphosphate) + phosphate. It carries out the reaction a 1,2-diacyl-sn-glycero-3-phospho-(1D-myo-inositol-3,5-bisphosphate) + H2O = a 1,2-diacyl-sn-glycero-3-phospho-(1D-myo-inositol-5-phosphate) + phosphate. The catalysed reaction is a 1,2-diacyl-sn-glycero-3-phospho-(1D-myo-inositol-3,5-bisphosphate) + H2O = a 1,2-diacyl-sn-glycero-3-phospho-(1D-myo-inositol-3-phosphate) + phosphate. The enzyme catalyses a 1,2-diacyl-sn-glycero-3-phospho-(1D-myo-inositol-4,5-bisphosphate) + H2O = a 1,2-diacyl-sn-glycero-3-phospho-(1D-myo-inositol 4-phosphate) + phosphate. In terms of biological role, dephosphorylates phosphatidylinositol phosphates, such as phosphatidylinositol 3,4,5-trisphosphate (PIP3) and phosphatidylinositol 3,5-diphosphates, with preference for PIP3. Phosphate can be hydrolyzed from the D3 and D5 positions in the inositol ring. Has low tyrosine-protein phosphatase activity in vitro; however, the relevance of such activity in vivo is unclear. Plays an important role in adipogenesis of mesenchymal stem cells (MSCs). Regulates the phosphorylation state of AKT1 by regulating the levels of PIP3 level in MSCs and preadipocyte cells. Required for hair bundle maturation, a process that enables hair cells to detect and transmit sound and balance signals effectively, therefore affecting auditory function. May act by regulating the level of phosphatidylinositol 4,5-bisphosphate (PIP2) level in the basal region of hair bundles. The sequence is that of Phosphatidylinositol phosphatase PTPRQ (Ptprq) from Rattus norvegicus (Rat).